The following is a 136-amino-acid chain: MGFLKFSPFLVVSILLLYQACGLQAVPLRSTLESSPGMATLSEEEARLLAALVQNYMQMKVRELEQEEEQEAEGSSLDSPRSKRCGNLSTCMLGTYTQDLNKFHTFPQTSIGVGAPGKKRDMAKDLETNHHPYFGN.

A signal peptide spans 1-25; sequence MGFLKFSPFLVVSILLLYQACGLQA. Residues 26-82 constitute a propeptide that is removed on maturation; it reads VPLRSTLESSPGMATLSEEEARLLAALVQNYMQMKVRELEQEEEQEAEGSSLDSPRS. Ser-42 is modified (phosphoserine). Residues 64-84 form a disordered region; the sequence is LEQEEEQEAEGSSLDSPRSKR. Cys-85 and Cys-91 form a disulfide bridge. Asn-87 is a glycosylation site (N-linked (GlcNAc...) asparagine). Residues 114–136 form a disordered region; that stretch reads GAPGKKRDMAKDLETNHHPYFGN. Pro-116 is modified (proline amide). Basic and acidic residues predominate over residues 118-130; that stretch reads KKRDMAKDLETNH. The propeptide occupies 121–136; it reads DMAKDLETNHHPYFGN.

It belongs to the calcitonin family.

It localises to the secreted. Functionally, calcitonin is a peptide hormone that causes a rapid but short-lived drop in the level of calcium and phosphate in blood by promoting the incorporation of those ions in the bones. Calcitonin function is mediated by the calcitonin receptor/CALCR and the CALCR-RAMP2 (AMYR2) receptor complex. The polypeptide is Calcitonin (Rattus norvegicus (Rat)).